An 860-amino-acid chain; its full sequence is Alanine--tRNA ligase (860 aa).

His553, His557, Cys655, and His659 together coordinate Zn(2+).

It belongs to the class-II aminoacyl-tRNA synthetase family. Zn(2+) serves as cofactor.

The protein localises to the cytoplasm. The catalysed reaction is tRNA(Ala) + L-alanine + ATP = L-alanyl-tRNA(Ala) + AMP + diphosphate. Functionally, catalyzes the attachment of alanine to tRNA(Ala) in a two-step reaction: alanine is first activated by ATP to form Ala-AMP and then transferred to the acceptor end of tRNA(Ala). Also edits incorrectly charged Ser-tRNA(Ala) and Gly-tRNA(Ala) via its editing domain. This is Alanine--tRNA ligase from Legionella pneumophila (strain Paris).